A 1876-amino-acid polypeptide reads, in one-letter code: Phenolphthiocerol/phthiocerol polyketide synthase subunit A (1876 aa).

The region spanning 9 to 83 (ADLRHWLIDY…ALAAYLAAPE (75 aa)) is the Carrier 1 domain. An O-(pantetheine 4'-phosphoryl)serine modification is found at S43. The Ketosynthase family 3 (KS3) domain occupies 101–526 (DEPIAVVGMG…GTNAHVVIEQ (426 aa)). Active-site for beta-ketoacyl synthase activity residues include C273, H408, and H448. Residues 626–950 (SPGPGTVFVY…NLNKAHTIHP (325 aa)) are acyltransferase. Residue S720 is the For malonyltransferase activity of the active site. The N-terminal hotdog fold stretch occupies residues 997–1112 (HTTVATVSAS…AQLSSSPSDS (116 aa)). The PKS/mFAS DH domain occupies 997 to 1267 (HTTVATVSAS…YRALDFGLDV (271 aa)). Catalysis depends on H1027, which acts as the Proton acceptor; for dehydratase activity. Residues 1102–1130 (TAQLSSSPSDSASSLNEHHRANGQPPERA) are disordered. The segment covering 1106–1115 (SSSPSDSASS) has biased composition (low complexity). The tract at residues 1130–1267 (AHRDLIPDLA…YRALDFGLDV (138 aa)) is C-terminal hotdog fold. The active-site Proton donor; for dehydratase activity is the D1186. 1491 to 1551 (AAYLITGGLG…RRRIDAIRAL (61 aa)) is a binding site for NADP(+). The interval 1491–1728 (AAYLITGGLG…DGYDVAQAVV (238 aa)) is beta-ketoacyl reductase. Residues 1759-1836 (EVRSELEQGL…SLASYLAKRV (78 aa)) enclose the Carrier 2 domain. S1796 is subject to O-(pantetheine 4'-phosphoryl)serine.

The cofactor is NADP(+). Requires pantetheine 4'-phosphate as cofactor.

The enzyme catalyses icosanoyl-[(phenol)carboxyphthiodiolenone synthase] + 2 (S)-methylmalonyl-CoA + 3 malonyl-CoA + 5 NADPH + 10 H(+) = C32-carboxyphthiodiolenone-[(phenol)carboxyphthiodiolenone synthase] + 5 CO2 + 5 NADP(+) + 5 CoA + 2 H2O. It carries out the reaction docosanoyl-[(phenol)carboxyphthiodiolenone synthase] + 2 (S)-methylmalonyl-CoA + 3 malonyl-CoA + 5 NADPH + 10 H(+) = C34-carboxyphthiodiolenone-[(phenol)carboxyphthiodiolenone synthase] + 5 CO2 + 5 NADP(+) + 5 CoA + 2 H2O. It catalyses the reaction 17-(4-hydroxyphenyl)heptadecanoyl-[(phenol)carboxyphthiodiolenone synthase] + 2 (S)-methylmalonyl-CoA + 3 malonyl-CoA + 5 NADPH + 10 H(+) = C35-(phenol)carboxyphthiodiolenone-[(phenol)carboxyphthiodiolenone synthase] + 5 CO2 + 5 NADP(+) + 5 CoA + 2 H2O. The catalysed reaction is 19-(4-hydroxyphenyl)nonadecanoyl-[(phenol)carboxyphthiodiolenone synthase] + 2 (S)-methylmalonyl-CoA + 3 malonyl-CoA + 5 NADPH + 10 H(+) = C37-(phenol)carboxyphthiodiolenone-[(phenol)carboxyphthiodiolenone synthase] + 5 CO2 + 5 NADP(+) + 5 CoA + 2 H2O. The protein operates within lipid metabolism; fatty acid biosynthesis. Functionally, part of the PpsABCDE complex involved in the biosynthesis of the lipid core common to phthiocerols and phenolphthiocerols by successive additions of malonyl-CoA or methylmalonyl-CoA extender units. PpsA can accept as substrate the activated forms of either icosanoyl (C20), docosanoyl (C22) or lignoceroyl (C24) groups from FadD26, or a (4-hydroxyphenyl)-C17 or (4-hydroxyphenyl)-C19 fatty acyl from FadD29. PpsA initiates the biosynthesis and extends its substrate using a malonyl-CoA extender unit. The PpsB and PpsC proteins add the second and third malonyl-CoA extender units. PpsD adds an (R)-methylmalonyl unit and PpsE adds a second (R)-methylmalonyl unit. The incorporation of the methylmalonyl units results in formation of two branched methyl groups in the elongated product. This is Phenolphthiocerol/phthiocerol polyketide synthase subunit A (ppsA) from Mycobacterium tuberculosis (strain CDC 1551 / Oshkosh).